The sequence spans 613 residues: Probable inactive purple acid phosphatase 1 (613 aa).

The first 24 residues, 1 to 24 (MRESLVAILVTVISVLGAIHQVKS), serve as a signal peptide directing secretion. N-linked (GlcNAc...) asparagine glycans are attached at residues Asn89 and Asn116. Residue Asp295 coordinates Fe cation. Asn316 carries N-linked (GlcNAc...) asparagine glycosylation. Fe cation contacts are provided by Asp336 and Tyr339. Asp336 lines the Zn(2+) pocket. 3 residues coordinate Zn(2+): Asn369, His458, and His500. Asn369 provides a ligand contact to substrate. Substrate is bound at residue 500–502 (HAH). Residue His502 participates in Fe cation binding. N-linked (GlcNAc...) asparagine glycans are attached at residues Asn528 and Asn551.

It belongs to the metallophosphoesterase superfamily. Purple acid phosphatase family. In terms of assembly, homodimer. It depends on Fe cation as a cofactor. Requires Zn(2+) as cofactor. Expressed in roots, stems, leaves, flowers and siliques.

It localises to the secreted. The sequence is that of Probable inactive purple acid phosphatase 1 (PAP1) from Arabidopsis thaliana (Mouse-ear cress).